A 209-amino-acid chain; its full sequence is MMTTMRRHATTLALFAASTTAVTAVVNMLTEPTISHQAMLQQKMLLDQVVPAELYNSDIQKECYVVTNPALGSSAPHRVFIARQNGEPVAAALESTAPDGYSGAIRLLVGADFHGKVLGVRVTEHHETPGLGDKIEVRISDWITRFNGLMVQGEHDARWAVKKEGGMFDQFTGATITPRAVINSVKRSALYLQTLPPQINTLSACGENQ.

The helical transmembrane segment at 9-29 threads the bilayer; the sequence is ATTLALFAASTTAVTAVVNML. Residue Thr-175 is modified to FMN phosphoryl threonine.

The protein belongs to the RnfG family. As to quaternary structure, the complex is composed of six subunits: RnfA, RnfB, RnfC, RnfD, RnfE and RnfG. Requires FMN as cofactor.

It localises to the cell inner membrane. Its function is as follows. Part of a membrane-bound complex that couples electron transfer with translocation of ions across the membrane. In Pectobacterium atrosepticum (strain SCRI 1043 / ATCC BAA-672) (Erwinia carotovora subsp. atroseptica), this protein is Ion-translocating oxidoreductase complex subunit G.